The primary structure comprises 957 residues: Retinoblastoma-related protein 1 (957 aa).

A domain A region spans residues 369-569; sequence TPVSTAMTTA…EKGSSMYNSL (201 aa). Residues 369-808 form a pocket region; the sequence is TPVSTAMTTA…NEVFIPTVKP (440 aa). The spacer stretch occupies residues 570–677; sequence IVARPTLSAE…PAAGGETCAE (108 aa). Positions 678-808 are domain B; the sequence is TGIGVFLSKI…NEVFIPTVKP (131 aa). The interval 814 to 854 is disordered; that stretch reads GPGTSPNRNNEPKSGGDAASFPESPRLSRFPNLPDMSPKKV.

The protein belongs to the retinoblastoma protein (RB) family.

Its subcellular location is the nucleus. Its function is as follows. Regulator of biological processes that recruits a histone deacetylase to control gene transcription. May play a role in the entry into mitosis, negatively regulating the cell proliferation. Formation of stable complexes with geminiviridae replication-associated proteins may create a cellular environment which favors viral DNA replication. The chain is Retinoblastoma-related protein 1 (RBR1) from Triticum aestivum (Wheat).